The primary structure comprises 219 residues: 2-C-methyl-D-erythritol 4-phosphate cytidylyltransferase (219 aa).

The protein belongs to the IspD/TarI cytidylyltransferase family. IspD subfamily.

The enzyme catalyses 2-C-methyl-D-erythritol 4-phosphate + CTP + H(+) = 4-CDP-2-C-methyl-D-erythritol + diphosphate. It functions in the pathway isoprenoid biosynthesis; isopentenyl diphosphate biosynthesis via DXP pathway; isopentenyl diphosphate from 1-deoxy-D-xylulose 5-phosphate: step 2/6. Catalyzes the formation of 4-diphosphocytidyl-2-C-methyl-D-erythritol from CTP and 2-C-methyl-D-erythritol 4-phosphate (MEP). The polypeptide is 2-C-methyl-D-erythritol 4-phosphate cytidylyltransferase (Chlamydia trachomatis serovar L2 (strain ATCC VR-902B / DSM 19102 / 434/Bu)).